Consider the following 334-residue polypeptide: B1 bradykinin receptor (334 aa).

Residues 1 to 21 form a disordered region; it reads MASQASLKLQPSNQSQQAPPN. Residues 1-41 are Extracellular-facing; sequence MASQASLKLQPSNQSQQAPPNITSCEGAPEAWDLLCRVLPG. A compositionally biased stretch (low complexity) spans 10 to 21; the sequence is QPSNQSQQAPPN. N-linked (GlcNAc...) asparagine glycosylation is found at Asn13 and Asn21. A helical transmembrane segment spans residues 42 to 62; it reads FVITVCFFGLLGNLLVLSFFL. The Cytoplasmic segment spans residues 63-80; the sequence is LPWRRWWQQRRQRLTIAE. Residues 81–101 traverse the membrane as a helical segment; that stretch reads IYLANLAASDLVFVLGLPFWA. The Extracellular segment spans residues 102–118; it reads ENVGNRFNWPFGSDLCR. Cys117 and Cys196 form a disulfide bridge. A helical transmembrane segment spans residues 119–139; sequence VVSGVIKANLFISIFLVVAIS. Residues 140-161 lie on the Cytoplasmic side of the membrane; the sequence is QDRYRLLVYPMTSWGNRRRRQA. A helical membrane pass occupies residues 162–182; sequence QVTCLLIWVAGGLLSTPTFLL. Residues 183-214 lie on the Extracellular side of the membrane; that stretch reads RSVKVVPDLNISACILLFPHEAWHFVRMVELN. A glycan (N-linked (GlcNAc...) asparagine) is linked at Asn192. Residues 215–235 traverse the membrane as a helical segment; it reads VLGFLLPLAAILYFNFHILAS. At 236–258 the chain is on the cytoplasmic side; it reads LRGQKEASRTRCGGPKDSKTMGL. Residues 259–279 traverse the membrane as a helical segment; that stretch reads ILTLVASFLVCWAPYHFFAFL. Topologically, residues 280-302 are extracellular; it reads DFLVQVRVIQDCFWKELTDLGLQ. Residues 303–323 traverse the membrane as a helical segment; the sequence is LANFFAFVNSCLNPLIYVFAG. Residues 324-334 lie on the Cytoplasmic side of the membrane; it reads RLFKTRVLGTL.

The protein belongs to the G-protein coupled receptor 1 family. Bradykinin receptor subfamily. BDKRB1 sub-subfamily. Expressed in heart, liver and lung.

It is found in the cell membrane. Its function is as follows. This is a receptor for bradykinin. Could be a factor in chronic pain and inflammation. This is B1 bradykinin receptor (Bdkrb1) from Mus musculus (Mouse).